The primary structure comprises 47 residues: GVPCRCDSDGPSVHGNTLSGTIWVGSCETGWHKCNTEHNLFHECCKQ.

Proline 3 bears the Hydroxyproline mark. 3 disulfides stabilise this stretch: cysteine 4–cysteine 44, cysteine 6–cysteine 34, and cysteine 27–cysteine 45.

Belongs to the sea anemone sodium channel inhibitory toxin family. Type I subfamily.

The protein localises to the secreted. It localises to the nematocyst. Functionally, inhibits voltage-gated sodium channels (Nav). This Radianthus crispa (Leathery sea anemone) protein is Delta-stichotoxin-Hcr3a.